The sequence spans 302 residues: Ornithine carbamoyltransferase (302 aa).

Residues 52–55 (STRT), Gln79, Arg103, and 130–133 (HPCQ) each bind carbamoyl phosphate. L-ornithine contacts are provided by residues Asn161, Asp221, and 225 to 226 (SM). Residues 261 to 262 (CL) and Arg289 contribute to the carbamoyl phosphate site.

It belongs to the aspartate/ornithine carbamoyltransferase superfamily. OTCase family.

It is found in the cytoplasm. It catalyses the reaction carbamoyl phosphate + L-ornithine = L-citrulline + phosphate + H(+). It participates in amino-acid biosynthesis; L-arginine biosynthesis; L-arginine from L-ornithine and carbamoyl phosphate: step 1/3. Functionally, reversibly catalyzes the transfer of the carbamoyl group from carbamoyl phosphate (CP) to the N(epsilon) atom of ornithine (ORN) to produce L-citrulline. The polypeptide is Ornithine carbamoyltransferase (Methanosarcina acetivorans (strain ATCC 35395 / DSM 2834 / JCM 12185 / C2A)).